A 112-amino-acid polypeptide reads, in one-letter code: Protein BEX5 (112 aa).

Composition is skewed to basic and acidic residues over residues 1–12 (MEKDPKERREEE) and 30–51 (PKPR…REDM). Residues 1 to 56 (MEKDPKERREEEQAPVQNEEACPMGGGEGPKPRENVRGDWDPPAQDFREDMPNGLV) form a disordered region. A his cluster region spans residues 101–105 (HHDHH). Position 109 (cysteine 109) interacts with Zn(2+).

Belongs to the BEX family. Post-translationally, ubiquitinated. Degraded by the proteasome.

It localises to the cytoplasm. The sequence is that of Protein BEX5 (BEX5) from Bos taurus (Bovine).